We begin with the raw amino-acid sequence, 234 residues long: Uridylate kinase (234 aa).

9 to 12 (KLSG) contributes to the ATP binding site. Position 51 (Gly51) interacts with UMP. Residues Gly52 and Arg56 each contribute to the ATP site. Residues Asp71 and 132–139 (CGNPFFTT) each bind UMP. 3 residues coordinate ATP: Thr159, Tyr165, and Asp168.

The protein belongs to the UMP kinase family. In terms of assembly, homohexamer.

The protein resides in the cytoplasm. It catalyses the reaction UMP + ATP = UDP + ADP. It participates in pyrimidine metabolism; CTP biosynthesis via de novo pathway; UDP from UMP (UMPK route): step 1/1. With respect to regulation, inhibited by UTP. Functionally, catalyzes the reversible phosphorylation of UMP to UDP. This Prochlorococcus marinus (strain MIT 9515) protein is Uridylate kinase.